Consider the following 862-residue polypeptide: Eukaryotic translation initiation factor 3 subunit C (862 aa).

Residues 1 to 81 are disordered; the sequence is MSSRFFYGGG…EEEEKVTVVK (81 aa). The segment covering 17-54 has biased composition (acidic residues); the sequence is SSDEEELYSDREEEEKSEEEESSEEEDETSEEEESDEE. The span at 55–65 shows a compositional bias: basic and acidic residues; sequence TGAKKFLKDVA. The span at 66-75 shows a compositional bias: acidic residues; the sequence is SDSEEEEEEE. A PCI domain is found at 600-774; sequence FHMHINLELL…NAIVFRKGVE (175 aa). Positions 813–862 are disordered; the sequence is RDQGAGARGGRGSGRGGQARGGPRFPGGQQGRRPGGQQFGGGALGGAIKA. Residues 818 to 862 are compositionally biased toward gly residues; it reads GARGGRGSGRGGQARGGPRFPGGQQGRRPGGQQFGGGALGGAIKA.

Belongs to the eIF-3 subunit C family. As to quaternary structure, component of the eukaryotic translation initiation factor 3 (eIF-3) complex.

The protein resides in the cytoplasm. Its function is as follows. Component of the eukaryotic translation initiation factor 3 (eIF-3) complex, which is involved in protein synthesis of a specialized repertoire of mRNAs and, together with other initiation factors, stimulates binding of mRNA and methionyl-tRNAi to the 40S ribosome. The eIF-3 complex specifically targets and initiates translation of a subset of mRNAs involved in cell proliferation. In Neosartorya fischeri (strain ATCC 1020 / DSM 3700 / CBS 544.65 / FGSC A1164 / JCM 1740 / NRRL 181 / WB 181) (Aspergillus fischerianus), this protein is Eukaryotic translation initiation factor 3 subunit C (nip1).